A 62-amino-acid polypeptide reads, in one-letter code: Chromatin protein Cren7 1 (62 aa).

This sequence belongs to the Cren7 family. In terms of assembly, monomer. Methylated at multiple sites, to varying extents.

The protein localises to the chromosome. It localises to the cytoplasm. Its function is as follows. A chromatin protein, binds double-stranded DNA without sequence specificity. Constrains negative DNA supercoils. The chain is Chromatin protein Cren7 1 (cren7-1) from Hyperthermus butylicus (strain DSM 5456 / JCM 9403 / PLM1-5).